The sequence spans 188 residues: Chitin synthase 2 (188 aa).

This sequence belongs to the chitin synthase family.

It is found in the cell membrane. The enzyme catalyses [(1-&gt;4)-N-acetyl-beta-D-glucosaminyl](n) + UDP-N-acetyl-alpha-D-glucosamine = [(1-&gt;4)-N-acetyl-beta-D-glucosaminyl](n+1) + UDP + H(+). Functionally, polymerizes chitin, a structural polymer of the cell wall and septum, by transferring the sugar moiety of UDP-GlcNAc to the non-reducing end of the growing chitin polymer. This Exophiala jeanselmei (Dematiaceous fungus) protein is Chitin synthase 2 (CHS2).